The primary structure comprises 118 residues: Probable small nuclear ribonucleoprotein Sm D2 (118 aa).

A Sm domain is found at 29–115; it reads LSILTNSVKN…VILVVKNPLA (87 aa).

It belongs to the snRNP core protein family.

It is found in the nucleus. The protein localises to the cytoplasm. The protein resides in the cytosol. Its function is as follows. Plays a role in pre-mRNA splicing as a core component of the spliceosomal U1, U2, U4 and U5 small nuclear ribonucleoproteins (snRNPs), the building blocks of the spliceosome. This chain is Probable small nuclear ribonucleoprotein Sm D2 (snr-4), found in Caenorhabditis elegans.